The primary structure comprises 100 residues: Small ribosomal subunit protein uS17 (100 aa).

This sequence belongs to the universal ribosomal protein uS17 family. In terms of assembly, part of the 30S ribosomal subunit.

In terms of biological role, one of the primary rRNA binding proteins, it binds specifically to the 5'-end of 16S ribosomal RNA. The chain is Small ribosomal subunit protein uS17 from Fervidobacterium nodosum (strain ATCC 35602 / DSM 5306 / Rt17-B1).